The sequence spans 264 residues: Small ribosomal subunit protein eS1B (264 aa).

The disordered stretch occupies residues 233 to 264 (GEGGGSGKPAADETGAKVERADGYEPPVQESV). Residues 242–255 (AADETGAKVERADG) show a composition bias toward basic and acidic residues.

The protein belongs to the eukaryotic ribosomal protein eS1 family. As to quaternary structure, component of the small ribosomal subunit. Mature ribosomes consist of a small (40S) and a large (60S) subunit. The 40S subunit contains about 33 different proteins and 1 molecule of RNA (18S). The 60S subunit contains about 49 different proteins and 3 molecules of RNA (28S, 5.8S and 5S). Part of the small subunit (SSU) processome, composed of more than 70 proteins and the RNA chaperone small nucleolar RNA (snoRNA) U3.

The protein resides in the cytoplasm. It is found in the nucleus. The protein localises to the nucleolus. Functionally, component of the small ribosomal subunit. The ribosome is a large ribonucleoprotein complex responsible for the synthesis of proteins in the cell. Part of the small subunit (SSU) processome, first precursor of the small eukaryotic ribosomal subunit. During the assembly of the SSU processome in the nucleolus, many ribosome biogenesis factors, an RNA chaperone and ribosomal proteins associate with the nascent pre-rRNA and work in concert to generate RNA folding, modifications, rearrangements and cleavage as well as targeted degradation of pre-ribosomal RNA by the RNA exosome. May play a role during erythropoiesis. The protein is Small ribosomal subunit protein eS1B (rps3a-b) of Xenopus laevis (African clawed frog).